The chain runs to 481 residues: Glycogen synthase (481 aa).

Lys15 is a binding site for ADP-alpha-D-glucose.

This sequence belongs to the glycosyltransferase 1 family. Bacterial/plant glycogen synthase subfamily.

The enzyme catalyses [(1-&gt;4)-alpha-D-glucosyl](n) + ADP-alpha-D-glucose = [(1-&gt;4)-alpha-D-glucosyl](n+1) + ADP + H(+). It participates in glycan biosynthesis; glycogen biosynthesis. In terms of biological role, synthesizes alpha-1,4-glucan chains using ADP-glucose. In Mesorhizobium japonicum (strain LMG 29417 / CECT 9101 / MAFF 303099) (Mesorhizobium loti (strain MAFF 303099)), this protein is Glycogen synthase.